Here is a 165-residue protein sequence, read N- to C-terminus: C-phycoerythrin class 2 subunit alpha (165 aa).

Position 75 (Cys75) interacts with phycourobilin. (2R,3E)-phycoerythrobilin is bound by residues Cys83 and Cys140.

The protein belongs to the phycobiliprotein family. Heterodimer of an alpha and a beta chain. Contains two covalently linked phycoerythrobilin chromophores and one covalently linked phycourobilin chromophore.

The protein localises to the cellular thylakoid membrane. In terms of biological role, light-harvesting photosynthetic bile pigment-protein from the phycobiliprotein complex. This chain is C-phycoerythrin class 2 subunit alpha (mpeA), found in Synechococcus sp. (strain WH8020).